Reading from the N-terminus, the 211-residue chain is Uracil phosphoribosyltransferase (211 aa).

Residues R79, R104, and D131–S139 each bind 5-phospho-alpha-D-ribose 1-diphosphate. Residues I196 and G201–A203 each bind uracil. Residue D202 participates in 5-phospho-alpha-D-ribose 1-diphosphate binding.

Belongs to the UPRTase family. It depends on Mg(2+) as a cofactor.

It catalyses the reaction UMP + diphosphate = 5-phospho-alpha-D-ribose 1-diphosphate + uracil. Its pathway is pyrimidine metabolism; UMP biosynthesis via salvage pathway; UMP from uracil: step 1/1. With respect to regulation, allosterically activated by GTP. In terms of biological role, catalyzes the conversion of uracil and 5-phospho-alpha-D-ribose 1-diphosphate (PRPP) to UMP and diphosphate. In Limosilactobacillus fermentum (strain NBRC 3956 / LMG 18251) (Lactobacillus fermentum), this protein is Uracil phosphoribosyltransferase.